The chain runs to 507 residues: Dihydrolipoyl dehydrogenase 2, mitochondrial (507 aa).

A mitochondrion-targeting transit peptide spans 1 to 36 (MAMASLARRKAYFLTRNISNSPTDAFRFSFSLTRGF). FAD-binding positions include 73–82 (EKRGALGGTC), lysine 91, glycine 155, and 184–186 (TGS). Cysteine 82 and cysteine 87 are oxidised to a cystine. NAD(+) is bound by residues 221 to 228 (GAGYIGLE), glutamate 244, valine 278, and glycine 313. FAD is bound by residues aspartate 354 and 360–363 (MLAH). Histidine 486 serves as the catalytic Proton acceptor.

Belongs to the class-I pyridine nucleotide-disulfide oxidoreductase family. Homodimer. Part of both the glycine cleavage system composed of four proteins: P, T, L and H and of the pyruvate dehydrogenase complex containing multiple copies of three enzymatic components: pyruvate dehydrogenase (E1), dihydrolipoamide acetyltransferase (E2) and lipoamide dehydrogenase (E3). It depends on FAD as a cofactor. Post-translationally, S-nytrosylated at unknown positions. Preferentially expressed in roots, flowers and siliques and at a lower level in stems and leaves.

It localises to the mitochondrion matrix. It carries out the reaction N(6)-[(R)-dihydrolipoyl]-L-lysyl-[protein] + NAD(+) = N(6)-[(R)-lipoyl]-L-lysyl-[protein] + NADH + H(+). Lipoamide dehydrogenase is a component of the glycine decarboxylase (GDC) or glycine cleavage system as well as of the alpha-ketoacid dehydrogenase complexes. LPD1 is probably the protein most often associated with the glycine decarboxylase complex while LPD2 is probably incorporated into alpha-ketoacid dehydrogenase complexes. This chain is Dihydrolipoyl dehydrogenase 2, mitochondrial (LPD2), found in Arabidopsis thaliana (Mouse-ear cress).